Reading from the N-terminus, the 508-residue chain is Light-independent protochlorophyllide reductase subunit B (508 aa).

Residue D36 participates in [4Fe-4S] cluster binding. The active-site Proton donor is D294. 429-430 contacts substrate; the sequence is GM.

It belongs to the ChlB/BchB/BchZ family. Protochlorophyllide reductase is composed of three subunits; ChlL, ChlN and ChlB. Forms a heterotetramer of two ChlB and two ChlN subunits. Requires [4Fe-4S] cluster as cofactor.

The protein localises to the plastid. It localises to the chloroplast. It catalyses the reaction chlorophyllide a + oxidized 2[4Fe-4S]-[ferredoxin] + 2 ADP + 2 phosphate = protochlorophyllide a + reduced 2[4Fe-4S]-[ferredoxin] + 2 ATP + 2 H2O. The protein operates within porphyrin-containing compound metabolism; chlorophyll biosynthesis (light-independent). Its function is as follows. Component of the dark-operative protochlorophyllide reductase (DPOR) that uses Mg-ATP and reduced ferredoxin to reduce ring D of protochlorophyllide (Pchlide) to form chlorophyllide a (Chlide). This reaction is light-independent. The NB-protein (ChlN-ChlB) is the catalytic component of the complex. In Pyropia yezoensis (Susabi-nori), this protein is Light-independent protochlorophyllide reductase subunit B.